Here is a 114-residue protein sequence, read N- to C-terminus: Flagellar hook-basal body complex protein FliE (114 aa).

Belongs to the FliE family.

Its subcellular location is the bacterial flagellum basal body. The sequence is that of Flagellar hook-basal body complex protein FliE from Burkholderia multivorans (strain ATCC 17616 / 249).